A 266-amino-acid polypeptide reads, in one-letter code: Chymotrypsin-like elastase family member 1 (266 aa).

Residues 1–16 (MLRLLVFTSLVLYGHS) form the signal peptide. Residues 17–26 (TQDFPETNAR) constitute a propeptide, activation peptide. The 238-residue stretch at 27–264 (VVGGTAVSKN…YISWINNAIA (238 aa)) folds into the Peptidase S1 domain. Cys-56 and Cys-72 are oxidised to a cystine. The Charge relay system role is filled by His-71. Ca(2+) contacts are provided by Asp-85, Asn-87, Gln-90, and Glu-95. N-linked (GlcNAc...) asparagine glycosylation is present at Asn-87. The active-site Charge relay system is the Asp-119. 3 disulfides stabilise this stretch: Cys-153-Cys-220, Cys-184-Cys-200, and Cys-210-Cys-240. Ser-214 (charge relay system) is an active-site residue. Asn-241 is a glycosylation site (N-linked (GlcNAc...) asparagine).

Belongs to the peptidase S1 family. Elastase subfamily. It depends on Ca(2+) as a cofactor. Pancreas.

The protein localises to the secreted. It carries out the reaction Hydrolysis of proteins, including elastin. Preferential cleavage: Ala-|-Xaa.. In terms of biological role, serine proteases that hydrolyze many proteins in addition to elastin. In Bos taurus (Bovine), this protein is Chymotrypsin-like elastase family member 1 (CELA1).